The chain runs to 188 residues: dCTP deaminase (188 aa).

Residues 111–116 (KSTYAR), 135–137 (TLE), Gln156, Tyr170, and Gln180 contribute to the dCTP site. Glu137 serves as the catalytic Proton donor/acceptor.

It belongs to the dCTP deaminase family. As to quaternary structure, homotrimer.

It catalyses the reaction dCTP + H2O + H(+) = dUTP + NH4(+). It functions in the pathway pyrimidine metabolism; dUMP biosynthesis; dUMP from dCTP (dUTP route): step 1/2. Functionally, catalyzes the deamination of dCTP to dUTP. This is dCTP deaminase from Janthinobacterium sp. (strain Marseille) (Minibacterium massiliensis).